Reading from the N-terminus, the 293-residue chain is Germ cell-specific gene 1-like protein 2 (293 aa).

The Cytoplasmic portion of the chain corresponds to 1–8 (MDRAKQQQ). Residues 9–29 (ALLLLPVCLALTFSLTAVVSS) traverse the membrane as a helical segment. At 30–120 (HWCEGTRRVV…RSVVPAEEQG (91 aa)) the chain is on the extracellular side. 2 N-linked (GlcNAc...) asparagine glycosylation sites follow: Asn59 and Asn67. The chain crosses the membrane as a helical span at residues 121 to 141 (VLWLSIGGEVLDIVLILTSAI). Over 142–160 (LLGSRVSCRSPGFHWLRVD) the chain is Cytoplasmic. Residues 161–181 (ALVAIFMVLAGLLGMVAHMMY) traverse the membrane as a helical segment. At 182-204 (TTIFQITVNLGPEDWKPQTWDYG) the chain is on the extracellular side. Residues 205–225 (WSYCLAWGSFALCLAVSVSAM) form a helical membrane-spanning segment. The Cytoplasmic portion of the chain corresponds to 226–293 (SRFTAARLEF…PGAPGKVSIC (68 aa)).

The protein belongs to the GSG1 family.

It localises to the membrane. In Homo sapiens (Human), this protein is Germ cell-specific gene 1-like protein 2.